A 131-amino-acid chain; its full sequence is Translation initiation factor 5A (131 aa).

A Hypusine modification is found at Lys37.

The protein belongs to the eIF-5A family.

It localises to the cytoplasm. Functions by promoting the formation of the first peptide bond. The polypeptide is Translation initiation factor 5A (eIF5A) (Methanococcus vannielii (strain ATCC 35089 / DSM 1224 / JCM 13029 / OCM 148 / SB)).